Consider the following 465-residue polypeptide: uncharacterized protein (465 aa).

Disordered stretches follow at residues 95–173, 407–426, and 443–465; these read STST…RKDP, QEMEGKRNESKSDDEGKSDK, and ANPIETARMARRNRRSKGSSSKK. Over residues 118–137 the composition is skewed to basic residues; that stretch reads KTGSKKVTRSKKSKKTKRRS. A compositionally biased stretch (low complexity) spans 138-150; the sequence is STTVTTTTISNSK. Basic and acidic residues predominate over residues 153-173; the sequence is TPDKDKDSKDQRKQRTKRKDP. A compositionally biased stretch (basic residues) spans 451-465; that stretch reads MARRNRRSKGSSSKK.

This is an uncharacterized protein from Caenorhabditis elegans.